We begin with the raw amino-acid sequence, 142 residues long: Large ribosomal subunit protein uL11 (142 aa).

The protein belongs to the universal ribosomal protein uL11 family. As to quaternary structure, part of the ribosomal stalk of the 50S ribosomal subunit. Interacts with L10 and the large rRNA to form the base of the stalk. L10 forms an elongated spine to which L12 dimers bind in a sequential fashion forming a multimeric L10(L12)X complex. In terms of processing, one or more lysine residues are methylated.

Its function is as follows. Forms part of the ribosomal stalk which helps the ribosome interact with GTP-bound translation factors. The sequence is that of Large ribosomal subunit protein uL11 from Pectobacterium carotovorum subsp. carotovorum (strain PC1).